Consider the following 109-residue polypeptide: Large ribosomal subunit protein uL24 (109 aa).

Belongs to the universal ribosomal protein uL24 family. As to quaternary structure, part of the 50S ribosomal subunit.

Functionally, one of two assembly initiator proteins, it binds directly to the 5'-end of the 23S rRNA, where it nucleates assembly of the 50S subunit. Its function is as follows. One of the proteins that surrounds the polypeptide exit tunnel on the outside of the subunit. This is Large ribosomal subunit protein uL24 from Rickettsia rickettsii (strain Iowa).